The chain runs to 238 residues: Sugar fermentation stimulation protein homolog (238 aa).

This sequence belongs to the SfsA family.

In Actinobacillus succinogenes (strain ATCC 55618 / DSM 22257 / CCUG 43843 / 130Z), this protein is Sugar fermentation stimulation protein homolog.